Consider the following 514-residue polypeptide: 2,3-bisphosphoglycerate-independent phosphoglycerate mutase (514 aa).

Residues Asp13 and Ser63 each coordinate Mn(2+). Ser63 acts as the Phosphoserine intermediate in catalysis. Residues His124, 154–155 (RD), Arg186, Arg192, 258–261 (RADR), and Lys332 contribute to the substrate site. Residues Asp399, His403, Asp440, His441, and His459 each coordinate Mn(2+).

Belongs to the BPG-independent phosphoglycerate mutase family. As to quaternary structure, monomer. It depends on Mn(2+) as a cofactor.

It catalyses the reaction (2R)-2-phosphoglycerate = (2R)-3-phosphoglycerate. The protein operates within carbohydrate degradation; glycolysis; pyruvate from D-glyceraldehyde 3-phosphate: step 3/5. Functionally, catalyzes the interconversion of 2-phosphoglycerate and 3-phosphoglycerate. This Legionella pneumophila (strain Paris) protein is 2,3-bisphosphoglycerate-independent phosphoglycerate mutase.